The chain runs to 258 residues: MLVLYGHSTQDVPETNARVVGGTEARRNSWPSQISLQYLSGGKWYHTCGGTLIRQNWVMTAAHCVDRTMTFRVVIGEHNLSQNDGTEQSASVQKIVVHPYWNSNDVSAGYDIALLRLAQKVTLNSYVQLGVLPQEGAILANNSPCYITGWGLTKTNGQLAQVLQQAYLPTVDYAICSSSSYWGSIVKKSMVCAGGDGIRSGCQGDSGGPLHCSVNGKYTVHGVTSFVSSLGCNVSRKPTVFTRVSAYITWINNVIASN.

Residues 1–8 (MLVLYGHS) form the signal peptide. The propeptide at 9-18 (TQDVPETNAR) is activation peptide. Residues 19 to 256 (VVGGTEARRN…YITWINNVIA (238 aa)) enclose the Peptidase S1 domain. Residues Cys-48 and Cys-64 are joined by a disulfide bond. His-63 (charge relay system) is an active-site residue. The Ca(2+) site is built by Glu-77, Asn-79, Gln-82, and Glu-87. Asn-79 carries an N-linked (GlcNAc...) asparagine glycan. The active-site Charge relay system is Asp-111. Disulfide bonds link Cys-145-Cys-212, Cys-176-Cys-192, and Cys-202-Cys-232. Ser-206 acts as the Charge relay system in catalysis. An N-linked (GlcNAc...) asparagine glycan is attached at Asn-233.

The protein belongs to the peptidase S1 family. Elastase subfamily. The cofactor is Ca(2+).

Its subcellular location is the secreted. It carries out the reaction Hydrolysis of proteins, including elastin. Preferential cleavage: Ala-|-Xaa.. Serine proteases that hydrolyze many proteins in addition to elastin. This chain is Chymotrypsin-like elastase family member 1 (CELA1), found in Canis lupus familiaris (Dog).